An 855-amino-acid chain; its full sequence is DNA mismatch repair protein MutS (855 aa).

ATP is bound at residue 617-624 (GPNMGGKS).

Belongs to the DNA mismatch repair MutS family.

This protein is involved in the repair of mismatches in DNA. It is possible that it carries out the mismatch recognition step. This protein has a weak ATPase activity. This is DNA mismatch repair protein MutS from Baumannia cicadellinicola subsp. Homalodisca coagulata.